Here is an 86-residue protein sequence, read N- to C-terminus: Large ribosomal subunit protein bL31 (86 aa).

The disordered stretch occupies residues 65–86; the sequence is YGMGSANSATSKEQKEEKDSKK. The span at 76–86 shows a compositional bias: basic and acidic residues; the sequence is KEQKEEKDSKK.

This sequence belongs to the bacterial ribosomal protein bL31 family. Type A subfamily. Part of the 50S ribosomal subunit.

Functionally, binds the 23S rRNA. The sequence is that of Large ribosomal subunit protein bL31 from Prochlorococcus marinus (strain AS9601).